Reading from the N-terminus, the 398-residue chain is MDTQAFKRSLHHSERYNRRGFGRANEVASNLEKAYQSSLIGSIRDNGYVLQHGRLQVKLAEAFGFCWGVERAVAMAYETRRHYPSERIWITNEIIHNPSVNEHLREMDVLFIHAEGGVKDFSCVNDGDVVILPAFGATVQEMELLHERGCHIIDTTCPWVSKVWHTVEKHKKQEFTSIIHGKVKHEETLATSSFAGTYLVVLDLDEAQLVADYILGQGDRAAFMKRFAKACSANFDPDQDLQRLGVANQTTMLKSETEEIGRLFERTMLRKYGPIELNKHFLSFNTICDATEERQQAMFSLVDEPLDLLVVIGGFNSSNTTHLQEIAISRGIRSFHIDTPERIGDNNSIQHKPLGEDLFIESNFLPAGSVSVGITSGASTPDRVVEHVIQKLIDLTSG.

Cys66 serves as a coordination point for [4Fe-4S] cluster. His96 provides a ligand contact to (2E)-4-hydroxy-3-methylbut-2-enyl diphosphate. His96 provides a ligand contact to dimethylallyl diphosphate. His96 contacts isopentenyl diphosphate. Cys157 contacts [4Fe-4S] cluster. His185 contributes to the (2E)-4-hydroxy-3-methylbut-2-enyl diphosphate binding site. His185 contributes to the dimethylallyl diphosphate binding site. His185 is an isopentenyl diphosphate binding site. Catalysis depends on Glu187, which acts as the Proton donor. Thr250 serves as a coordination point for (2E)-4-hydroxy-3-methylbut-2-enyl diphosphate. Residue Cys288 participates in [4Fe-4S] cluster binding. The (2E)-4-hydroxy-3-methylbut-2-enyl diphosphate site is built by Ser317, Ser318, Asn319, and Ser379. Ser317, Ser318, Asn319, and Ser379 together coordinate dimethylallyl diphosphate. Isopentenyl diphosphate contacts are provided by Ser317, Ser318, Asn319, and Ser379.

Belongs to the IspH family. Requires [4Fe-4S] cluster as cofactor.

It catalyses the reaction isopentenyl diphosphate + 2 oxidized [2Fe-2S]-[ferredoxin] + H2O = (2E)-4-hydroxy-3-methylbut-2-enyl diphosphate + 2 reduced [2Fe-2S]-[ferredoxin] + 2 H(+). It carries out the reaction dimethylallyl diphosphate + 2 oxidized [2Fe-2S]-[ferredoxin] + H2O = (2E)-4-hydroxy-3-methylbut-2-enyl diphosphate + 2 reduced [2Fe-2S]-[ferredoxin] + 2 H(+). The protein operates within isoprenoid biosynthesis; dimethylallyl diphosphate biosynthesis; dimethylallyl diphosphate from (2E)-4-hydroxy-3-methylbutenyl diphosphate: step 1/1. It participates in isoprenoid biosynthesis; isopentenyl diphosphate biosynthesis via DXP pathway; isopentenyl diphosphate from 1-deoxy-D-xylulose 5-phosphate: step 6/6. Catalyzes the conversion of 1-hydroxy-2-methyl-2-(E)-butenyl 4-diphosphate (HMBPP) into a mixture of isopentenyl diphosphate (IPP) and dimethylallyl diphosphate (DMAPP). Acts in the terminal step of the DOXP/MEP pathway for isoprenoid precursor biosynthesis. The polypeptide is 4-hydroxy-3-methylbut-2-enyl diphosphate reductase (Prochlorococcus marinus (strain MIT 9313)).